A 97-amino-acid chain; its full sequence is Citrate lyase acyl carrier protein (97 aa).

S14 is subject to O-(phosphoribosyl dephospho-coenzyme A)serine.

Belongs to the CitD family. In terms of assembly, oligomer with a subunit composition of (alpha,beta,gamma)6.

The protein localises to the cytoplasm. Functionally, covalent carrier of the coenzyme of citrate lyase. This chain is Citrate lyase acyl carrier protein, found in Lactobacillus helveticus (strain DPC 4571).